The following is a 313-amino-acid chain: MNQLFGSDKLRLPQRAQAGIAFVRYLIARMNHDRINVNAGYLAYITLLSIVPMLTVLLSILSKFSVFENVGSVLQSFIINNFVPASGDAVHAALQEFIANTGKMTAVGAAFLFVAALMLISNIDKNLNYIWRVKKKRRAVFSFSMYWMVLTLGPILVGASIAATSYITSLRLLDSEAISTVYDQLLRWLPFILSSSAFVGLYLLVPNKKVQFSHAVVGAMIAAVLFELSKKGFAAYITQFPSYQLIYGALAAIPILFVWVYLCWLIVLIGAEVTAALGEREHWRPTEDVIQSLPNNDTELEKDTQRDRFDSES.

6 consecutive transmembrane segments (helical) span residues Y41–L61, M104–D124, A139–A159, L185–V205, A215–A235, and A249–I269. The interval L293–S313 is disordered. The segment covering E299–S313 has biased composition (basic and acidic residues).

This sequence belongs to the UPF0761 family.

Its subcellular location is the cell inner membrane. In Vibrio vulnificus (strain YJ016), this protein is UPF0761 membrane protein VV0203.